A 759-amino-acid chain; its full sequence is Catalase-peroxidase (759 aa).

Residues 1–24 (MTQDKCPFKEQSSQPNFAGGGTSN) form a disordered region. Positions 96–242 (WHSAGTYRVF…LAAAHMGLIY (147 aa)) form a cross-link, tryptophyl-tyrosyl-methioninium (Trp-Tyr) (with M-268). His-97 (proton acceptor) is an active-site residue. Residues 242–268 (YVNPEGPDGNPDPVAAAHDIRDTFGRM) constitute a cross-link (tryptophyl-tyrosyl-methioninium (Tyr-Met) (with W-96)). Residue His-283 participates in heme b binding.

Belongs to the peroxidase family. Peroxidase/catalase subfamily. Homodimer or homotetramer. Requires heme b as cofactor. Post-translationally, formation of the three residue Trp-Tyr-Met cross-link is important for the catalase, but not the peroxidase activity of the enzyme.

The protein resides in the cytoplasm. The enzyme catalyses H2O2 + AH2 = A + 2 H2O. It carries out the reaction 2 H2O2 = O2 + 2 H2O. Bifunctional enzyme with both catalase and broad-spectrum peroxidase activity. This Aspergillus fumigatus (strain CBS 144.89 / FGSC A1163 / CEA10) (Neosartorya fumigata) protein is Catalase-peroxidase.